The following is a 353-amino-acid chain: Rhodopsin (353 aa).

The Extracellular segment spans residues 1-36 (MNGTEGPYFYIPMVNTTGIVRSPYEYPQYYLVNPAA). N-linked (GlcNAc...) asparagine glycans are attached at residues Asn2 and Asn15. The chain crosses the membrane as a helical span at residues 37–61 (YAALGAYMFLLILIGFPVNFLTLYV). Residues 62 to 73 (TIEHKKLRTPLN) lie on the Cytoplasmic side of the membrane. The chain crosses the membrane as a helical span at residues 74-96 (YILLNLAVADLFMVFGGFTTTMY). The Extracellular portion of the chain corresponds to 97–110 (TSMHGYFVLGRLGC). Residues Cys110 and Cys187 are joined by a disulfide bond. The helical transmembrane segment at 111 to 133 (NLEGFFATLGGEIALWSLVVLAV) threads the bilayer. Residues 134-136 (ERW) carry the 'Ionic lock' involved in activated form stabilization motif. Over 134–152 (ERWMVVCKPISNFRFGEDH) the chain is Cytoplasmic. A helical membrane pass occupies residues 153–173 (AIMGLAFTWVMAAACAVPPLV). Over 174 to 202 (GWSRYIPEGMQCSCGIDYYTRAEGFNNES) the chain is Extracellular. A glycan (N-linked (GlcNAc...) asparagine) is linked at Asn200. A helical transmembrane segment spans residues 203–224 (FVIYMFVCHFLIPLVVVFFCYG). Topologically, residues 225–252 (RLLCAVKEAAAAQQESETTQRAEREVSR) are cytoplasmic. The chain crosses the membrane as a helical span at residues 253-274 (MVVIMVVAFLVCWCPYAGVAWY). Topologically, residues 275 to 286 (IFTHQGSEFGPL) are extracellular. Residues 287–308 (FMTFPAFFAKSSSIYNPMIYIC) form a helical membrane-spanning segment. An N6-(retinylidene)lysine modification is found at Lys296. The Cytoplasmic segment spans residues 309–353 (MNKQFRQCMITTLCCGKNPFEEEEGASTTSKTEASSVSSSSVSPA). S-palmitoyl cysteine attachment occurs at residues Cys322 and Cys323. A disordered region spans residues 329–353 (EEEEGASTTSKTEASSVSSSSVSPA). The segment covering 334 to 353 (ASTTSKTEASSVSSSSVSPA) has biased composition (low complexity).

This sequence belongs to the G-protein coupled receptor 1 family. Opsin subfamily. Phosphorylated on some or all of the serine and threonine residues present in the C-terminal region. Post-translationally, contains one covalently linked retinal chromophore.

The protein resides in the membrane. Its subcellular location is the cell projection. It localises to the cilium. The protein localises to the photoreceptor outer segment. In terms of biological role, photoreceptor required for image-forming vision at low light intensity. While most salt water fish species use retinal as chromophore, most freshwater fish use 3-dehydroretinal, or a mixture of retinal and 3-dehydroretinal. Light-induced isomerization of 11-cis to all-trans retinal triggers a conformational change that activates signaling via G-proteins. Subsequent receptor phosphorylation mediates displacement of the bound G-protein alpha subunit by arrestin and terminates signaling. This Chelon auratus (Golden grey mullet) protein is Rhodopsin (rho).